Here is a 432-residue protein sequence, read N- to C-terminus: Malate dehydrogenase [NADP], chloroplastic (432 aa).

A chloroplast-targeting transit peptide spans 1-40 (MGLSTVYSPAGPRLVPAPLGRCRSAQPRRPRRAPLATVRC). The tract at residues 18 to 37 (PLGRCRSAQPRRPRRAPLAT) is disordered. C67 and C72 are disulfide-bonded. 96–102 (GAAGMIS) contributes to the NADP(+) binding site. Substrate is bound by residues R177 and R183. Position 190 (N190) interacts with NADP(+). Q197 serves as a coordination point for NAD(+). 214-216 (VGN) contacts NADP(+). 2 residues coordinate substrate: N216 and R247. The Proton acceptor role is filled by H272. The cysteines at positions 408 and 420 are disulfide-linked.

The protein belongs to the LDH/MDH superfamily. MDH type 2 family. Homodimer.

The protein resides in the plastid. The protein localises to the chloroplast. The enzyme catalyses (S)-malate + NADP(+) = oxaloacetate + NADPH + H(+). With respect to regulation, chloroplast NADP-MDH is activated upon illumination. In order to be enzymatically active, disulfide bridges on the protein must be reduced by thioredoxin which receives electrons from ferredoxin and the electron transport system of photosynthesis. In terms of biological role, the chloroplastic, NADP-dependent form is essential for the photosynthesis C4 cycle, which allows plants to circumvent the problem of photorespiration. In C4 plants, NADP-MDH activity acts to convert oxaloacetate to malate in chloroplasts of mesophyll cells for transport to the bundle sheath cells. This is Malate dehydrogenase [NADP], chloroplastic from Zea mays (Maize).